We begin with the raw amino-acid sequence, 493 residues long: Endoglucanase 23 (493 aa).

The first 23 residues, 1–23 (MKASIYLVTVFILLLLLLPTAIP), serve as a signal peptide directing secretion. Aspartate 78 (nucleophile) is an active-site residue. A glycan (N-linked (GlcNAc...) asparagine) is linked at asparagine 297. Histidine 410 is a catalytic residue. The N-linked (GlcNAc...) asparagine glycan is linked to asparagine 465. Residue glutamate 470 is part of the active site.

Belongs to the glycosyl hydrolase 9 (cellulase E) family.

It is found in the secreted. The enzyme catalyses Endohydrolysis of (1-&gt;4)-beta-D-glucosidic linkages in cellulose, lichenin and cereal beta-D-glucans.. This Arabidopsis thaliana (Mouse-ear cress) protein is Endoglucanase 23.